A 439-amino-acid polypeptide reads, in one-letter code: Hydrogenobyrinate a,c-diamide synthase (439 aa).

One can recognise a GATase cobBQ-type domain in the interval 247 to 439 (RIALAEDGAF…FFHAIARASA (193 aa)). Cysteine 329 acts as the Nucleophile in catalysis.

Belongs to the CobB/CbiA family. It depends on Mg(2+) as a cofactor.

It catalyses the reaction hydrogenobyrinate + 2 L-glutamine + 2 ATP + 2 H2O = hydrogenobyrinate a,c-diamide + 2 L-glutamate + 2 ADP + 2 phosphate + 2 H(+). It participates in cofactor biosynthesis; adenosylcobalamin biosynthesis; cob(II)yrinate a,c-diamide from precorrin-2 (aerobic route): step 9/10. Catalyzes the ATP-dependent amidation of the two carboxylate groups at positions a and c of hydrogenobyrinate, using either L-glutamine or ammonia as the nitrogen source. This is Hydrogenobyrinate a,c-diamide synthase from Mesorhizobium japonicum (strain LMG 29417 / CECT 9101 / MAFF 303099) (Mesorhizobium loti (strain MAFF 303099)).